Reading from the N-terminus, the 267-residue chain is Coiled-coil domain-containing protein 172 (267 aa).

2 coiled-coil regions span residues 24–97 (MREV…CEAI) and 128–191 (LMKE…EETE).

This sequence belongs to the CCDC172 family. In terms of assembly, may interact with TEKT2.

Its subcellular location is the cytoplasm. It localises to the cell projection. The protein resides in the cilium. The polypeptide is Coiled-coil domain-containing protein 172 (Ccdc172) (Mus musculus (Mouse)).